The sequence spans 374 residues: MSLTGYFAAPLCSIFLFILAHADAGQQEDSLYMWIDAHQARVLIGFEEDILIVAEGKMAPFTHDFRKAQQRMPAIPVNIHAMNFTWQATGQAEYFYEFLSLRSLDKGIMADPTVNMPLLGTVPHKATVIQVGFPCLGNQDGVAAFEVNVIVMNSEGNVILQTPQNAIFFKTCQQAKCTGGCRNGGFCNDRHVCECPDGFYGPHCEKALCMPRCMNGGLCVTPGLCICPPGYYGINCDKVNCTTHCLNGGTCFYPGKCICPSGYEGEQCETSKCQQPCRNGGKCSGKNKCKCSKGYQGDLCSKPVCEPSCGAHGTCIEPNKCQCKEGWNGRYCNKKYGSNLMNALRPTGSRNRQHTPSPKRTEDRQALPESNYIW.

A signal peptide spans 1–28 (MSLTGYFAAPLCSIFLFILAHADAGQQE). A WIF domain is found at 33 to 172 (MWIDAHQARV…PQNAIFFKTC (140 aa)). An N-linked (GlcNAc...) asparagine glycan is attached at Asn-83. Intrachain disulfides connect Cys-135–Cys-172, Cys-177–Cys-187, Cys-181–Cys-193, Cys-195–Cys-204, Cys-209–Cys-219, Cys-213–Cys-225, and Cys-227–Cys-236. 5 EGF-like domains span residues 173-205 (QQAK…PHCE), 208-237 (LCMP…INCD), 237-269 (DKVN…EQCE), 270-301 (TSKC…DLCS), and 302-333 (KPVC…RYCN). Asn-240 carries N-linked (GlcNAc...) asparagine glycosylation. 9 disulfides stabilise this stretch: Cys-241–Cys-251, Cys-245–Cys-257, Cys-259–Cys-268, Cys-273–Cys-283, Cys-277–Cys-289, Cys-291–Cys-300, Cys-305–Cys-315, Cys-309–Cys-321, and Cys-323–Cys-332. Residues 343-374 (ALRPTGSRNRQHTPSPKRTEDRQALPESNYIW) form a disordered region. Positions 348-358 (GSRNRQHTPSP) are enriched in polar residues.

In terms of tissue distribution, during somatogenesis, expressed predominantly in unsegmented paraxial presomitic mesoderm and, to a much lesser extent, in newly segmented somites.

It is found in the secreted. Its function is as follows. Binds to WNT proteins and inhibits their activities. May be involved in mesoderm segmentation. In Xenopus laevis (African clawed frog), this protein is Wnt inhibitory factor 1 (wif1).